A 404-amino-acid chain; its full sequence is S-adenosylmethionine synthase (404 aa).

Residue His-17 participates in ATP binding. A Mg(2+)-binding site is contributed by Asp-19. Position 45 (Glu-45) interacts with K(+). Residues Glu-58 and Gln-101 each coordinate L-methionine. The segment at 101-111 (QSPDIAMGVDQ) is flexible loop. ATP contacts are provided by residues 177–179 (DGK), 244–245 (RF), Asp-253, 259–260 (RK), Ala-276, and Lys-280. Asp-253 serves as a coordination point for L-methionine. Residue Lys-284 coordinates L-methionine.

The protein belongs to the AdoMet synthase family. As to quaternary structure, homotetramer; dimer of dimers. The cofactor is Mg(2+). K(+) serves as cofactor.

It is found in the cytoplasm. It catalyses the reaction L-methionine + ATP + H2O = S-adenosyl-L-methionine + phosphate + diphosphate. The protein operates within amino-acid biosynthesis; S-adenosyl-L-methionine biosynthesis; S-adenosyl-L-methionine from L-methionine: step 1/1. Its function is as follows. Catalyzes the formation of S-adenosylmethionine (AdoMet) from methionine and ATP. The overall synthetic reaction is composed of two sequential steps, AdoMet formation and the subsequent tripolyphosphate hydrolysis which occurs prior to release of AdoMet from the enzyme. The chain is S-adenosylmethionine synthase from Geobacillus thermodenitrificans (strain NG80-2).